We begin with the raw amino-acid sequence, 756 residues long: Cartilage oligomeric matrix protein (756 aa).

An N-terminal signal peptide occupies residues 1 to 20 (MVLAAARVLLLTLAALGASG). A COMP N-terminal region spans residues 22–85 (GQMPLGGDLG…PARTPKLTVR (64 aa)). Residues 86–125 (PLSQCSPGFCFPGVACTETANGARCGPCPEGFTGNGSHCA) form the EGF-like 1 domain. 10 cysteine pairs are disulfide-bonded: C90-C101, C95-C110, C113-C124, C130-C141, C135-C150, C183-C196, C190-C205, C228-C242, C236-C252, and C254-C265. Residue N120 is glycosylated (N-linked (GlcNAc...) asparagine). Positions 126 to 178 (DVNECTAHPCFPRVRCINTSPGFRCEACPPGFSGPTHEGVGLAFAKANKQVCT) constitute an EGF-like 2; calcium-binding domain. The region spanning 179–218 (DINECETGQHNCVPNSVCVNTVGSFQCGPCQPGFVGDQAS) is the EGF-like 3; calcium-binding domain. The region spanning 224–266 (PQRFCPDGTPSPCHEKADCVLERDGSRSCVCAVGWAGNGLICG) is the EGF-like 4 domain. TSP type-3 repeat units lie at residues 267–299 (RDTDLDGFPDEKLRCSERQCRKDNCVTVPNSGQ), 300–335 (EDVDQDGIGDACDPDADGDGVLNEKDNCPLVRNPDQ), 336–358 (RNTDGDKWGDACDNCRSQKNDDQ), 359–394 (KDTDKDGRGDACDDDIDGDRIRNPVDNCPKVPNSDQ), 395–417 (KDTDGDGVGDACDNCPQKSNADQ), 418–455 (RDVDHDFVGDACDSDQDQDGDGHQDSKDNCPTVPNSAQ), 456–491 (QDSDHDGQGDACDDDDDNDGVPDSRDNCRLVPNPGQ), and 492–527 (EDMDRDGVGDACQGDFDADKVVDKIDVCPENAEVTL). Residues 322–502 (NEKDNCPLVR…DMDRDGVGDA (181 aa)) are disordered. 3 stretches are compositionally biased toward basic and acidic residues: residues 333 to 345 (PDQRNTDGDKWGD), 351 to 369 (RSQKNDDQKDTDKDGRGDA), and 415 to 425 (ADQRDVDHDFV). The short motif at 366–368 (RGD) is the Cell attachment site element. The span at 466–475 (ACDDDDDNDG) shows a compositional bias: acidic residues. Positions 526-756 (TLTDFRAFQT…DYEAQRLLQA (231 aa)) are mediates cell survival and induction of the IAP family of survival proteins. The region spanning 531-745 (RAFQTVVLDP…LRYRCNDTIP (215 aa)) is the TSP C-terminal domain. A glycan (N-linked (GlcNAc...) asparagine) is linked at N741.

Belongs to the thrombospondin family. Pentamer; disulfide-linked. Exists in a more compact conformation in the presence of calcium and shows a more extended conformation in the absence of calcium. Interacts with ITGB3, ITGA5 and FN1. Binding to FN1 requires the presence of divalent cations (Ca(2+), Mg(2+) or Mn(2+)). The greatest amount of binding is seen in the presence of Mn(2+). Interacts with MATN1, MATN3, MATN4 and ACAN. Binds heparin, heparan sulfate and chondroitin sulfate. EDTA dimishes significantly its binding to ACAN and abolishes its binding to MATN3, MATN4 and chondroitin sulfate. Interacts with collagen I, II and IX, and interaction with these collagens is dependent on the presence of zinc ions. Interacts with ADAMTS12. Interacts with ITGA7. Ca(2+) serves as cofactor. Post-translationally, proteolytically cleaved by metalloproteases ADAMTS4 and ADAMTS1 with ADAMTS4 showing more potent activity.

The protein resides in the secreted. Its subcellular location is the extracellular space. It is found in the extracellular matrix. Functionally, plays a role in the structural integrity of cartilage via its interaction with other extracellular matrix proteins such as the collagens and fibronectin. Can mediate the interaction of chondrocytes with the cartilage extracellular matrix through interaction with cell surface integrin receptors. Could play a role in the pathogenesis of osteoarthritis. Potent suppressor of apoptosis in both primary chondrocytes and transformed cells. Suppresses apoptosis by blocking the activation of caspase-3 and by inducing the IAP family of survival proteins (BIRC3, BIRC2, BIRC5 and XIAP). Essential for maintaining a vascular smooth muscle cells (VSMCs) contractile/differentiated phenotype under physiological and pathological stimuli. Maintains this phenotype of VSMCs by interacting with ITGA7. This Bos taurus (Bovine) protein is Cartilage oligomeric matrix protein (COMP).